The following is a 123-amino-acid chain: Large ribosomal subunit protein uL14 (123 aa).

The protein belongs to the universal ribosomal protein uL14 family. In terms of assembly, part of the 50S ribosomal subunit. Forms a cluster with proteins L3 and L19. In the 70S ribosome, L14 and L19 interact and together make contacts with the 16S rRNA in bridges B5 and B8.

Binds to 23S rRNA. Forms part of two intersubunit bridges in the 70S ribosome. This Vibrio parahaemolyticus serotype O3:K6 (strain RIMD 2210633) protein is Large ribosomal subunit protein uL14.